Reading from the N-terminus, the 147-residue chain is MGFIFSKSMNESMKNQKEFMLMNARLQLERQLIMQSEMRERQMAMQIAWSREFLKYFGTFFGLAAISLTAGAIKKKKPAFLVPIVPLSFILTYQYDLGYGTLLERMKGEAEDILETEKSKLQLPRGMITFESIEKARKEQSRFFIDK.

Residues 1-52 (MGFIFSKSMNESMKNQKEFMLMNARLQLERQLIMQSEMRERQMAMQIAWSRE) are Extracellular-facing. The chain crosses the membrane as a helical span at residues 53 to 73 (FLKYFGTFFGLAAISLTAGAI). The Cytoplasmic portion of the chain corresponds to 74–78 (KKKKP). A helical membrane pass occupies residues 79-99 (AFLVPIVPLSFILTYQYDLGY). The Extracellular portion of the chain corresponds to 100-147 (GTLLERMKGEAEDILETEKSKLQLPRGMITFESIEKARKEQSRFFIDK).

As to quaternary structure, interacts with PLAT and PLAUR. In terms of tissue distribution, expressed in peripheral blood cells and monocytes. Expressed in adrenal medulla.

The protein resides in the cell membrane. Its function is as follows. Receptor for plasminogen. Regulates urokinase plasminogen activator-dependent and stimulates tissue-type plasminogen activator-dependent cell surface plasminogen activation. Proposed to be part of a local catecholaminergic cell plasminogen activation system that regulates neuroendocrine prohormone processing. Involved in regulation of inflammatory response; regulates monocyte chemotactic migration and matrix metalloproteinase activation, such as of MMP2 and MMP9. The protein is Plasminogen receptor (KT) (PLGRKT) of Homo sapiens (Human).